The following is a 91-amino-acid chain: Small ribosomal subunit protein uS19 (91 aa).

This sequence belongs to the universal ribosomal protein uS19 family.

Protein S19 forms a complex with S13 that binds strongly to the 16S ribosomal RNA. The chain is Small ribosomal subunit protein uS19 from Pseudomonas syringae pv. syringae (strain B728a).